A 169-amino-acid polypeptide reads, in one-letter code: Crossover junction endodeoxyribonuclease RuvC (169 aa).

Residues Asp15, Glu75, and Asp147 contribute to the active site. Asp15, Glu75, and Asp147 together coordinate Mg(2+).

This sequence belongs to the RuvC family. In terms of assembly, homodimer which binds Holliday junction (HJ) DNA. The HJ becomes 2-fold symmetrical on binding to RuvC with unstacked arms; it has a different conformation from HJ DNA in complex with RuvA. In the full resolvosome a probable DNA-RuvA(4)-RuvB(12)-RuvC(2) complex forms which resolves the HJ. Mg(2+) is required as a cofactor.

The protein resides in the cytoplasm. The enzyme catalyses Endonucleolytic cleavage at a junction such as a reciprocal single-stranded crossover between two homologous DNA duplexes (Holliday junction).. In terms of biological role, the RuvA-RuvB-RuvC complex processes Holliday junction (HJ) DNA during genetic recombination and DNA repair. Endonuclease that resolves HJ intermediates. Cleaves cruciform DNA by making single-stranded nicks across the HJ at symmetrical positions within the homologous arms, yielding a 5'-phosphate and a 3'-hydroxyl group; requires a central core of homology in the junction. The consensus cleavage sequence is 5'-(A/T)TT(C/G)-3'. Cleavage occurs on the 3'-side of the TT dinucleotide at the point of strand exchange. HJ branch migration catalyzed by RuvA-RuvB allows RuvC to scan DNA until it finds its consensus sequence, where it cleaves and resolves the cruciform DNA. This Caulobacter vibrioides (strain ATCC 19089 / CIP 103742 / CB 15) (Caulobacter crescentus) protein is Crossover junction endodeoxyribonuclease RuvC.